A 49-amino-acid chain; its full sequence is Large ribosomal subunit protein bL32 (49 aa).

This sequence belongs to the bacterial ribosomal protein bL32 family.

This Nautilia profundicola (strain ATCC BAA-1463 / DSM 18972 / AmH) protein is Large ribosomal subunit protein bL32.